Here is a 144-residue protein sequence, read N- to C-terminus: Large ribosomal subunit protein uL16 (144 aa).

The protein belongs to the universal ribosomal protein uL16 family. Part of the 50S ribosomal subunit.

Binds 23S rRNA and is also seen to make contacts with the A and possibly P site tRNAs. This chain is Large ribosomal subunit protein uL16, found in Caldanaerobacter subterraneus subsp. tengcongensis (strain DSM 15242 / JCM 11007 / NBRC 100824 / MB4) (Thermoanaerobacter tengcongensis).